A 184-amino-acid polypeptide reads, in one-letter code: Potassium-transporting ATPase KdpC subunit (184 aa).

A helical transmembrane segment spans residues 10–30 (LTFLMVVLFAVIYPLAIYGIA).

The protein belongs to the KdpC family. As to quaternary structure, the system is composed of three essential subunits: KdpA, KdpB and KdpC.

The protein localises to the cell inner membrane. Its function is as follows. Part of the high-affinity ATP-driven potassium transport (or Kdp) system, which catalyzes the hydrolysis of ATP coupled with the electrogenic transport of potassium into the cytoplasm. This subunit acts as a catalytic chaperone that increases the ATP-binding affinity of the ATP-hydrolyzing subunit KdpB by the formation of a transient KdpB/KdpC/ATP ternary complex. The sequence is that of Potassium-transporting ATPase KdpC subunit from Flavobacterium psychrophilum (strain ATCC 49511 / DSM 21280 / CIP 103535 / JIP02/86).